An 80-amino-acid polypeptide reads, in one-letter code: Protein YibX (80 aa).

The chain is Protein YibX from Escherichia coli (strain K12).